The primary structure comprises 472 residues: Adenosylhomocysteinase (472 aa).

Substrate-binding residues include Thr-60, Asp-136, and Glu-197. 198 to 200 (TTT) serves as a coordination point for NAD(+). Substrate contacts are provided by Lys-227 and Asp-231. NAD(+) contacts are provided by residues Asn-232, 261–266 (GYGDVG), Glu-284, Asn-319, 340–342 (IGH), and Asn-388.

It belongs to the adenosylhomocysteinase family. NAD(+) is required as a cofactor.

It is found in the cytoplasm. It catalyses the reaction S-adenosyl-L-homocysteine + H2O = L-homocysteine + adenosine. It functions in the pathway amino-acid biosynthesis; L-homocysteine biosynthesis; L-homocysteine from S-adenosyl-L-homocysteine: step 1/1. May play a key role in the regulation of the intracellular concentration of adenosylhomocysteine. In Maridesulfovibrio salexigens (strain ATCC 14822 / DSM 2638 / NCIMB 8403 / VKM B-1763) (Desulfovibrio salexigens), this protein is Adenosylhomocysteinase.